The chain runs to 142 residues: Large ribosomal subunit protein uL13 (142 aa).

This sequence belongs to the universal ribosomal protein uL13 family. Part of the 50S ribosomal subunit.

In terms of biological role, this protein is one of the early assembly proteins of the 50S ribosomal subunit, although it is not seen to bind rRNA by itself. It is important during the early stages of 50S assembly. The protein is Large ribosomal subunit protein uL13 of Azoarcus sp. (strain BH72).